The following is a 700-amino-acid chain: Calpain-2 catalytic subunit (700 aa).

At alanine 2 the chain carries N-acetylalanine. Positions 2 to 19 (AGIAAKLAKDREAAEGLG) are cleaved as a propeptide — anchors to the small subunit. In terms of domain architecture, Calpain catalytic spans 45-344 (LFQDPSFPAI…YSRLEICNLT (300 aa)). Residues isoleucine 89, glycine 91, and aspartate 96 each contribute to the Ca(2+) site. Cysteine 105 is a catalytic residue. Ca(2+) is bound by residues glutamate 175, glutamine 229, and lysine 230. Residues histidine 262 and asparagine 286 contribute to the active site. The Ca(2+) site is built by glutamate 292, aspartate 299, and glutamate 323. Residues 345 to 514 (PDTLTSDTYK…KKADYQAVDD (170 aa)) are domain III. Residues 515–529 (EIEANLEEFDISEDD) are linker. The tract at residues 530-700 (IDDGFRRLFA…LISWLCFSVL (171 aa)) is domain IV. 16 residues coordinate Ca(2+): alanine 542, aspartate 545, glutamate 547, glutamate 552, aspartate 585, aspartate 587, serine 589, lysine 591, glutamate 596, aspartate 615, aspartate 617, serine 619, threonine 621, glutamate 626, aspartate 658, and asparagine 661. EF-hand domains lie at 572–605 (FSIETCKIMVDMLDSDGSGKLGLKEFYILWTKIQ) and 602–637 (TKIQKYQKIYREIDVDRSGTMNSYEMRKALEEAGFK). Residues 667–700 (VRLETLFKIFKQLDPENTGTIELDLISWLCFSVL) form the EF-hand 3 domain.

The protein belongs to the peptidase C2 family. Forms a heterodimer with a small (regulatory) subunit (CAPNS1). Interacts with CPEB3; this leads to cleavage of CPEB3. Interacts with PIDD1 alternative open reading frame protein altPIDD1. Requires Ca(2+) as cofactor. In terms of tissue distribution, ubiquitous.

Its subcellular location is the cytoplasm. The protein localises to the cell membrane. The catalysed reaction is Broad endopeptidase specificity.. With respect to regulation, activated by 200-1000 micromolar concentrations of calcium and inhibited by calpastatin. Its function is as follows. Calcium-regulated non-lysosomal thiol-protease which catalyzes limited proteolysis of substrates involved in cytoskeletal remodeling and signal transduction. Proteolytically cleaves MYOC at 'Arg-226'. Proteolytically cleaves CPEB3 following neuronal stimulation which abolishes CPEB3 translational repressor activity, leading to translation of CPEB3 target mRNAs. The chain is Calpain-2 catalytic subunit (CAPN2) from Homo sapiens (Human).